The following is a 46-amino-acid chain: uncharacterized protein (46 aa).

The disordered stretch occupies residues 1 to 46; that stretch reads MNFGIKPDVSSGPRKGGPFKELSDFSKTSPTPQQPRSLSGKSVMLP. Residues 25–40 show a composition bias toward polar residues; the sequence is FSKTSPTPQQPRSLSG.

This is an uncharacterized protein from Dictyostelium discoideum (Social amoeba).